The following is a 333-amino-acid chain: DNA-directed RNA polymerase subunit alpha (333 aa).

Residues M1 to K234 are alpha N-terminal domain (alpha-NTD). An alpha C-terminal domain (alpha-CTD) region spans residues I248–A333.

It belongs to the RNA polymerase alpha chain family. In terms of assembly, homodimer. The RNAP catalytic core consists of 2 alpha, 1 beta, 1 beta' and 1 omega subunit. When a sigma factor is associated with the core the holoenzyme is formed, which can initiate transcription.

It carries out the reaction RNA(n) + a ribonucleoside 5'-triphosphate = RNA(n+1) + diphosphate. In terms of biological role, DNA-dependent RNA polymerase catalyzes the transcription of DNA into RNA using the four ribonucleoside triphosphates as substrates. In Pseudomonas entomophila (strain L48), this protein is DNA-directed RNA polymerase subunit alpha.